The sequence spans 416 residues: tRNA (guanine-N(7)-)-methyltransferase non-catalytic subunit wuho (416 aa).

The disordered stretch occupies residues 47-88; it reads TQSQESCPATATSTTAGKEPGGKEQQLAKQPEEGGTSASGSV. Residues 49-62 show a composition bias toward polar residues; sequence SQESCPATATSTTA. WD repeat units follow at residues 89-130, 177-216, 220-258, and 317-357; these read ATST…ARLL, GHLS…DIHS, GHRE…ELLQ, and AGSW…PTTN.

It belongs to the WD repeat TRM82 family. In terms of assembly, forms a heterodimer with the catalytic subunit Mettl1. Interacts with mei-P26 and weakly interacts with bgcn; required for the function or formation of the mei-P26-bgcn-bam-sxl complex. Interacts with nanos; may be involved in mei-P26-dependent derepression of the BMP signaling pathway. Interacts with Myc; the interaction may be mediated by mei-P26 and may be involved in the regulation of ribosome biogenesis. As to expression, in testis, it is present at high level in hub cells, a niche for germline stem cells of testis. Ubiquitously expressed in all testicular cells throughout spermatogenesis. Ubiquitously expressed in all germline and somatic cells of the ovary.

It is found in the nucleus. Its subcellular location is the cytoplasm. It functions in the pathway tRNA modification; N(7)-methylguanine-tRNA biosynthesis. Its function is as follows. Required for the Mettl1-dependent formation of N(7)-methylguanine at position 46 (m7G46) in tRNA. In the Mettl1-wuho methyltransferase complex, it is required to stabilize and induce conformational changes of the catalytic subunit. Required for binding of nanos mRNA and repression of translation by the mei-P26-bgcn-bam-sxl complex. May cooperate with mei-P26 and nanos to derepress the BMP signaling pathway. May cooperate with mei-P26 to suppress expression of a subset of microRNAs. May cooperate with mei-P26 to regulate bam expression levels in germline cells during gametogenesis. Required to promote mitosis to meiosis transition during gametogenesis. May regulate germline cell division in part by regulating ribosome biogenesis. The protein is tRNA (guanine-N(7)-)-methyltransferase non-catalytic subunit wuho of Drosophila erecta (Fruit fly).